The following is a 393-amino-acid chain: NAD(P)H-quinone oxidoreductase subunit H, chloroplastic (393 aa).

The protein belongs to the complex I 49 kDa subunit family. NDH is composed of at least 16 different subunits, 5 of which are encoded in the nucleus.

The protein localises to the plastid. The protein resides in the chloroplast thylakoid membrane. The catalysed reaction is a plastoquinone + NADH + (n+1) H(+)(in) = a plastoquinol + NAD(+) + n H(+)(out). The enzyme catalyses a plastoquinone + NADPH + (n+1) H(+)(in) = a plastoquinol + NADP(+) + n H(+)(out). Its function is as follows. NDH shuttles electrons from NAD(P)H:plastoquinone, via FMN and iron-sulfur (Fe-S) centers, to quinones in the photosynthetic chain and possibly in a chloroplast respiratory chain. The immediate electron acceptor for the enzyme in this species is believed to be plastoquinone. Couples the redox reaction to proton translocation, and thus conserves the redox energy in a proton gradient. The protein is NAD(P)H-quinone oxidoreductase subunit H, chloroplastic of Gossypium hirsutum (Upland cotton).